We begin with the raw amino-acid sequence, 400 residues long: Subtilisin-like protease 1 (400 aa).

An N-terminal signal peptide occupies residues 1–20 (MKFSQSLIALAACFLPLIAA). A propeptide spanning residues 21–119 (APVEAQHAKI…IEMDGKVQAN (99 aa)) is cleaved from the precursor. One can recognise an Inhibitor I9 domain in the interval 42–117 (SYIVVFNKGV…AWIEMDGKVQ (76 aa)). Residue asparagine 82 is glycosylated (N-linked (GlcNAc...) asparagine). Residues 128–400 (TWGLGRISHK…NLIAYNGNGA (273 aa)) enclose the Peptidase S8 domain. Catalysis depends on charge relay system residues aspartate 160, histidine 192, and serine 345.

Belongs to the peptidase S8 family.

The protein resides in the secreted. Its function is as follows. Major secreted subtilisin-like serine endopeptidase. Mediates the degradation of collagen, the major structural protein in the mammalian host. Degrades the nonhelical regions of collagen that function in the cross-linking of the helical components. May function as virulence factor involved in epidermal wing necrosis observed in white nose syndrome (WNS) in bats. This is Subtilisin-like protease 1 from Pseudogymnoascus destructans (strain ATCC MYA-4855 / 20631-21) (Bat white-nose syndrome fungus).